The primary structure comprises 329 residues: Malate dehydrogenase (329 aa).

13 to 19 (GAAGNIS) provides a ligand contact to NAD(+). R94 and R100 together coordinate substrate. Residues N107, Q114, and 131-133 (VGN) contribute to the NAD(+) site. N133 and R164 together coordinate substrate. H189 acts as the Proton acceptor in catalysis.

It belongs to the LDH/MDH superfamily. MDH type 2 family.

It catalyses the reaction (S)-malate + NAD(+) = oxaloacetate + NADH + H(+). In terms of biological role, catalyzes the reversible oxidation of malate to oxaloacetate. The sequence is that of Malate dehydrogenase from Psychrobacter arcticus (strain DSM 17307 / VKM B-2377 / 273-4).